Here is a 653-residue protein sequence, read N- to C-terminus: Sulfate transporter 1.2 (653 aa).

Residues 1–30 (MSSRAHPVDGSPATDGGHVPMKPSPTRHKV) form a disordered region. Topologically, residues 1–91 (MSSRAHPVDG…GRNYTFKKFR (91 aa)) are cytoplasmic. Residues 92–112 (GDLISGLTIASLCIPQDIGYA) form a helical membrane-spanning segment. Over 113–116 (KLAN) the chain is Extracellular. The chain crosses the membrane as a helical span at residues 117-137 (LDPKYGLYSSFVPPLVYACMG). At 138–141 (SSRD) the chain is on the cytoplasmic side. A helical transmembrane segment spans residues 142–162 (IAIGPVAVVSLLLGTLLRAEI). At 163 to 173 (DPNTSPDEYLR) the chain is on the extracellular side. 2 consecutive transmembrane segments (helical) span residues 174–194 (LAFT…FFRL) and 195–215 (GFLI…GAAI). The Extracellular portion of the chain corresponds to 216–253 (TIALQQLKGFLGIKKFTKKTDIISVLESVFKAAHHGWN). Residues 254–274 (WQTILIGASFLTFLLTSKIIG) traverse the membrane as a helical segment. The Cytoplasmic segment spans residues 275-280 (KKSKKL). A helical transmembrane segment spans residues 281-301 (FWVPAIAPLISVIVSTFFVYI). Topologically, residues 302 to 339 (TRADKQGVQIVKHLDQGINPSSFHLIYFTGDNLAKGIR) are extracellular. The helical transmembrane segment at 340-360 (IGVVAGMVALTEAVAIGRTFA) threads the bilayer. The Cytoplasmic segment spans residues 361–372 (AMKDYQIDGNKE). A helical transmembrane segment spans residues 373–393 (MVALGMMNVVGSMSSCYVATG). Residues 394–409 (SFSRSAVNFMAGCQTA) lie on the Extracellular side of the membrane. The chain crosses the membrane as a helical span at residues 410-430 (VSNIIMSIVVLLTLLFLTPLF). The Cytoplasmic portion of the chain corresponds to 431 to 438 (KYTPNAIL). Residues 439-459 (AAIIINAVIPLIDIQAAILIF) form a helical membrane-spanning segment. Over 460–466 (KVDKLDF) the chain is Extracellular. A helical transmembrane segment spans residues 467–487 (IACIGAFFGVIFVSVEIGLLI). Over 488–653 (AVSISFAKIL…ACCPKLSNEV (166 aa)) the chain is Cytoplasmic. An STAS domain is found at 522–645 (QYPEATMVPG…LTVADAVEAC (124 aa)).

It belongs to the SLC26A/SulP transporter (TC 2.A.53.1) family. Homodimer. Interacts with OASA1 through its STAS domain. Expressed in lateral root cap, root hairs, epidermal and cortical cells of roots.

It localises to the cell membrane. Interaction with OASA1 negatively impacts the transporter activity. In terms of biological role, high-affinity H(+)/sulfate cotransporter that mediates the uptake of the environmental sulfate by plant roots. Plays a central role in the regulation of sulfate assimilation. Unable to transport molybdate. This Arabidopsis thaliana (Mouse-ear cress) protein is Sulfate transporter 1.2 (SULTR1;2).